The primary structure comprises 307 residues: UPF0749 protein MT1871 (307 aa).

The signal sequence occupies residues 1-23; the sequence is MAESDRLLGGYDPNAGYSAHAGA. Transmembrane regions (helical) follow at residues 67–87 and 152–172; these read VSWM…AAAV and VLSL…VTVT.

It belongs to the UPF0749 family.

It is found in the cell membrane. The polypeptide is UPF0749 protein MT1871 (Mycobacterium tuberculosis (strain CDC 1551 / Oshkosh)).